The chain runs to 304 residues: Choline-phosphate cytidylyltransferase 2 (304 aa).

CTP is bound by residues 28–36 (IFDLFHFGH) and lysine 66. Lysine 66 and tryptophan 95 together coordinate substrate. CTP-binding positions include 112 to 113 (HD), tyrosine 117, and 142 to 146 (RTEGI). The interval 266–292 (QNGLTISKDNDDEQMSDDNEFAEEDCV) is disordered. Residues 275–291 (NDDEQMSDDNEFAEEDC) are compositionally biased toward acidic residues.

This sequence belongs to the cytidylyltransferase family.

The catalysed reaction is phosphocholine + CTP + H(+) = CDP-choline + diphosphate. Its pathway is phospholipid metabolism; phosphatidylcholine biosynthesis; phosphatidylcholine from phosphocholine: step 1/2. Plays an important role in the biosynthesis of the phospholipid phosphatidylcholine. Catalyzes the formation of CDP-choline. The protein is Choline-phosphate cytidylyltransferase 2 of Arabidopsis thaliana (Mouse-ear cress).